Here is a 211-residue protein sequence, read N- to C-terminus: Small ribosomal subunit protein uS5 (211 aa).

The S5 DRBM domain occupies 58 to 121; it reads FEERIVKLKR…KKAHNSIHTV (64 aa).

The protein belongs to the universal ribosomal protein uS5 family. As to quaternary structure, part of the 30S ribosomal subunit. Contacts proteins S4 and S8.

With S4 and S12 plays an important role in translational accuracy. Functionally, located at the back of the 30S subunit body where it stabilizes the conformation of the head with respect to the body. The protein is Small ribosomal subunit protein uS5 of Mycoplasma genitalium (strain ATCC 33530 / DSM 19775 / NCTC 10195 / G37) (Mycoplasmoides genitalium).